The sequence spans 564 residues: Esterase FE4 (564 aa).

An N-terminal signal peptide occupies residues M1–A23. The N-linked (GlcNAc...) asparagine glycan is linked to N81. C89 and C106 form a disulfide bridge. S214 serves as the catalytic Acyl-ester intermediate. C266 and C277 form a disulfide bridge. N-linked (GlcNAc...) asparagine glycosylation is present at N269. The active-site Charge relay system is E339. Residues N371, N404, and N443 are each glycosylated (N-linked (GlcNAc...) asparagine). The Charge relay system role is filled by H463.

This sequence belongs to the type-B carboxylesterase/lipase family.

The catalysed reaction is a carboxylic ester + H2O = an alcohol + a carboxylate + H(+). Its function is as follows. Overproduction of nonspecific esterases is a common mechanism of resistance to organophosphate insecticides. This Myzus persicae (Green peach aphid) protein is Esterase FE4.